Consider the following 90-residue polypeptide: UPF0335 protein Smed_2680 (90 aa).

Belongs to the UPF0335 family.

The chain is UPF0335 protein Smed_2680 from Sinorhizobium medicae (strain WSM419) (Ensifer medicae).